Here is a 390-residue protein sequence, read N- to C-terminus: Formate-dependent phosphoribosylglycinamide formyltransferase (390 aa).

N(1)-(5-phospho-beta-D-ribosyl)glycinamide-binding positions include 14 to 15 (EL) and glutamate 74. ATP contacts are provided by residues arginine 106, lysine 147, 152-157 (SSGKGQ), 187-190 (EQFI), and glutamate 195. The ATP-grasp domain occupies 111 to 304 (DLAAQELGIT…EFDLHARAIM (194 aa)). 2 residues coordinate Mg(2+): glutamate 263 and glutamate 275. N(1)-(5-phospho-beta-D-ribosyl)glycinamide contacts are provided by residues aspartate 282, lysine 351, and 358-359 (RR).

Belongs to the PurK/PurT family. Homodimer.

The catalysed reaction is N(1)-(5-phospho-beta-D-ribosyl)glycinamide + formate + ATP = N(2)-formyl-N(1)-(5-phospho-beta-D-ribosyl)glycinamide + ADP + phosphate + H(+). Its pathway is purine metabolism; IMP biosynthesis via de novo pathway; N(2)-formyl-N(1)-(5-phospho-D-ribosyl)glycinamide from N(1)-(5-phospho-D-ribosyl)glycinamide (formate route): step 1/1. Its function is as follows. Involved in the de novo purine biosynthesis. Catalyzes the transfer of formate to 5-phospho-ribosyl-glycinamide (GAR), producing 5-phospho-ribosyl-N-formylglycinamide (FGAR). Formate is provided by PurU via hydrolysis of 10-formyl-tetrahydrofolate. This Erythrobacter litoralis (strain HTCC2594) protein is Formate-dependent phosphoribosylglycinamide formyltransferase.